Here is a 275-residue protein sequence, read N- to C-terminus: Large ribosomal subunit protein uL2 (275 aa).

The segment at 221–275 is disordered; it reads RGTAMNPVDHPHGGGEGRTGEGRVPVNPWGQPTKGYRTRSNKRTNSMIVQRRHKR. Residues 229 to 241 show a composition bias toward basic and acidic residues; it reads DHPHGGGEGRTGE.

Belongs to the universal ribosomal protein uL2 family. As to quaternary structure, part of the 50S ribosomal subunit. Forms a bridge to the 30S subunit in the 70S ribosome.

In terms of biological role, one of the primary rRNA binding proteins. Required for association of the 30S and 50S subunits to form the 70S ribosome, for tRNA binding and peptide bond formation. It has been suggested to have peptidyltransferase activity; this is somewhat controversial. Makes several contacts with the 16S rRNA in the 70S ribosome. This is Large ribosomal subunit protein uL2 from Dechloromonas aromatica (strain RCB).